We begin with the raw amino-acid sequence, 113 residues long: T cell receptor alpha variable 8-3 (113 aa).

The N-terminal stretch at 1–20 is a signal peptide; sequence MLLELIPLLGIHFVLRTARA. An Ig-like domain is found at 21–113; that stretch reads QSVTQPDIHI…DAAEYFCAVG (93 aa). A disulfide bridge links C42 with C110. An N-linked (GlcNAc...) asparagine glycan is attached at N43.

As to quaternary structure, alpha-beta TR is a heterodimer composed of an alpha and beta chain; disulfide-linked. The alpha-beta TR is associated with the transmembrane signaling CD3 coreceptor proteins to form the TR-CD3 (TcR or TCR). The assembly of alpha-beta TR heterodimers with CD3 occurs in the endoplasmic reticulum where a single alpha-beta TR heterodimer associates with one CD3D-CD3E heterodimer, one CD3G-CD3E heterodimer and one CD247 homodimer forming a stable octameric structure. CD3D-CD3E and CD3G-CD3E heterodimers preferentially associate with TR alpha and TR beta chains, respectively. The association of the CD247 homodimer is the last step of TcR assembly in the endoplasmic reticulum and is required for transport to the cell surface.

It localises to the cell membrane. Its function is as follows. V region of the variable domain of T cell receptor (TR) alpha chain that participates in the antigen recognition. Alpha-beta T cell receptors are antigen specific receptors which are essential to the immune response and are present on the cell surface of T lymphocytes. Recognize peptide-major histocompatibility (MH) (pMH) complexes that are displayed by antigen presenting cells (APC), a prerequisite for efficient T cell adaptive immunity against pathogens. Binding of alpha-beta TR to pMH complex initiates TR-CD3 clustering on the cell surface and intracellular activation of LCK that phosphorylates the ITAM motifs of CD3G, CD3D, CD3E and CD247 enabling the recruitment of ZAP70. In turn ZAP70 phosphorylates LAT, which recruits numerous signaling molecules to form the LAT signalosome. The LAT signalosome propagates signal branching to three major signaling pathways, the calcium, the mitogen-activated protein kinase (MAPK) kinase and the nuclear factor NF-kappa-B (NF-kB) pathways, leading to the mobilization of transcription factors that are critical for gene expression and essential for T cell growth and differentiation. The T cell repertoire is generated in the thymus, by V-(D)-J rearrangement. This repertoire is then shaped by intrathymic selection events to generate a peripheral T cell pool of self-MH restricted, non-autoaggressive T cells. Post-thymic interaction of alpha-beta TR with the pMH complexes shapes TR structural and functional avidity. The sequence is that of T cell receptor alpha variable 8-3 from Homo sapiens (Human).